The following is a 136-amino-acid chain: Large ribosomal subunit protein bL17 (136 aa).

The protein belongs to the bacterial ribosomal protein bL17 family. As to quaternary structure, part of the 50S ribosomal subunit. Contacts protein L32.

In Rhodopseudomonas palustris (strain BisA53), this protein is Large ribosomal subunit protein bL17.